A 283-amino-acid chain; its full sequence is Para-Rep C7 (283 aa).

The region spanning 3–96 is the CRESS-DNA virus Rep endonuclease domain; it reads SIRATHWCFT…IAGPWEYGTW (94 aa). Residues 10–13 carry the RCR-1 motif; it reads CFTL. A divalent metal cation-binding residues include Glu36 and His42. An RCR-2 motif is present at residues 42-44; the sequence is HLQ. Residues 51-71 carry the Nuclear localization signal motif; that stretch reads KHVTLKKMKELLPGAHLEMAK. Tyr79 functions as the For DNA cleavage activity in the catalytic mechanism. An RCR-3 motif is present at residues 79–82; that stretch reads YCQK. Glu84 contacts a divalent metal cation. The short motif at 96–102 is the Nuclear localization signal element; it reads WISSGSH. 178-180 contributes to the ATP binding site; that stretch reads GKS.

It belongs to the nanoviridea/circoviridae replication-associated protein family. In terms of assembly, homooligomer (Potential). Rep binds to repeated DNA motifs (iterons). The cofactor is Mg(2+). Requires Mn(2+) as cofactor.

The protein resides in the host nucleus. The catalysed reaction is ATP + H2O = ADP + phosphate + H(+). In terms of biological role, initiates and terminates the replication only of its own subviral DNA molecule. The closed circular ssDNA genome is first converted to a superhelical dsDNA. Rep binds a specific hairpin at the genome origin of replication. Introduces an endonucleolytic nick within the intergenic region of the genome, thereby initiating the rolling circle replication (RCR). Following cleavage, binds covalently to the 5'-phosphate of DNA as a tyrosyl ester. The cleavage gives rise to a free 3'-OH that serves as a primer for the cellular DNA polymerase. The polymerase synthesizes the (+) strand DNA by rolling circle mechanism. After one round of replication, a Rep-catalyzed nucleotidyl transfer reaction releases a circular single-stranded virus genome, thereby terminating the replication. Displays origin-specific DNA cleavage, nucleotidyl transferase, ATPase and helicase activities. This Faba bean necrotic yellows C7 alphasatellite (FBNYC7A) protein is Para-Rep C7 (C7).